We begin with the raw amino-acid sequence, 334 residues long: RNA 3'-terminal phosphate cyclase (334 aa).

H279–D282 contacts ATP. H303 serves as the catalytic Tele-AMP-histidine intermediate.

Belongs to the RNA 3'-terminal cyclase family. Type 1 subfamily.

The protein resides in the cytoplasm. The enzyme catalyses a 3'-end 3'-phospho-ribonucleotide-RNA + ATP = a 3'-end 2',3'-cyclophospho-ribonucleotide-RNA + AMP + diphosphate. In terms of biological role, catalyzes the conversion of 3'-phosphate to a 2',3'-cyclic phosphodiester at the end of RNA. The mechanism of action of the enzyme occurs in 3 steps: (A) adenylation of the enzyme by ATP; (B) transfer of adenylate to an RNA-N3'P to produce RNA-N3'PP5'A; (C) and attack of the adjacent 2'-hydroxyl on the 3'-phosphorus in the diester linkage to produce the cyclic end product. The biological role of this enzyme is unknown but it is likely to function in some aspects of cellular RNA processing. The sequence is that of RNA 3'-terminal phosphate cyclase from Metallosphaera sedula (strain ATCC 51363 / DSM 5348 / JCM 9185 / NBRC 15509 / TH2).